The primary structure comprises 109 residues: Toxin YpjF (109 aa).

This sequence belongs to the CbtA/YkfI/YpjF toxin family. In terms of assembly, interacts with FtsZ but not MreB. Another group finds interaction with FtsZ and MreB.

Its function is as follows. Toxic component of a type IV toxin-antitoxin (TA) system. Acts as a dual toxin inhibitor that blocks cell division and cell elongation in genetically separable interactions with FtsZ and MreB. Overexpression results in inhibition of growth in liquid cultures. Overexpression leads to formation of lemon-shaped cells; inactivated by overexpression of cognate antitoxin YfjZ but not when the 2 genes are coexpressed from the same plasmid. Also neutralized by overexpression of non-cognate antitoxins YafW and CbeA. In Escherichia coli (strain K12), this protein is Toxin YpjF (ypjF).